We begin with the raw amino-acid sequence, 131 residues long: Small ribosomal subunit protein uS8 (131 aa).

The protein belongs to the universal ribosomal protein uS8 family. Part of the 30S ribosomal subunit. Contacts proteins S5 and S12.

Functionally, one of the primary rRNA binding proteins, it binds directly to 16S rRNA central domain where it helps coordinate assembly of the platform of the 30S subunit. This is Small ribosomal subunit protein uS8 from Dictyoglomus turgidum (strain DSM 6724 / Z-1310).